Here is a 224-residue protein sequence, read N- to C-terminus: Peroxiredoxin-6 (224 aa).

The Thioredoxin domain occupies 5–169 (LLLGDEAPNF…ILRVIISLQL (165 aa)). The required and sufficient for targeting to lysosomes and lamellar bodies stretch occupies residues 31 to 40 (DSWGILFSHP). Position 44 is a phosphothreonine (Thr-44). Cys-47 serves as the catalytic Cysteine sulfenic acid (-SOH) intermediate; for peroxidase activity. Lys-63 is modified (N6-acetyllysine). Tyr-89 bears the Phosphotyrosine mark. The active-site For phospholipase activity is the Asp-140. Position 177 is a phosphothreonine; by MAPK (Thr-177). Lys-209 bears the N6-acetyllysine; alternate mark. An N6-succinyllysine; alternate modification is found at Lys-209.

Belongs to the peroxiredoxin family. Prx6 subfamily. In terms of assembly, homodimer. Interacts with GSTP1; mediates PRDX6 glutathionylation and regeneration. Interacts with APEX1. Interacts with STH. May interact with FAM168B. May interact with HTR2A. In terms of processing, irreversibly inactivated by overoxidation of Cys-47 to sulfinic acid (Cys-SO(2)H) and sulfonic acid (Cys-SO(3)H) forms upon oxidative stress. Post-translationally, phosphorylation at Thr-177 by MAP kinases increases the phospholipase activity of the enzyme. The phosphorylated form exhibits a greater lysophosphatidylcholine acyltransferase activity compared to the non-phosphorylated form.

The protein localises to the cytoplasm. It localises to the lysosome. It catalyses the reaction a hydroperoxide + 2 glutathione = an alcohol + glutathione disulfide + H2O. It carries out the reaction a 1,2-diacyl-sn-glycero-3-phosphocholine + H2O = a 1-acyl-sn-glycero-3-phosphocholine + a fatty acid + H(+). The enzyme catalyses a 1-acyl-sn-glycero-3-phosphocholine + an acyl-CoA = a 1,2-diacyl-sn-glycero-3-phosphocholine + CoA. The catalysed reaction is 1-hexadecanoyl-sn-glycero-3-phosphocholine + hexadecanoyl-CoA = 1,2-dihexadecanoyl-sn-glycero-3-phosphocholine + CoA. It catalyses the reaction 1,2-dihexadecanoyl-sn-glycero-3-phosphocholine + H2O = 1-hexadecanoyl-sn-glycero-3-phosphocholine + hexadecanoate + H(+). In terms of biological role, thiol-specific peroxidase that catalyzes the reduction of hydrogen peroxide and organic hydroperoxides to water and alcohols, respectively. Can reduce H(2)O(2) and short chain organic, fatty acid, and phospholipid hydroperoxides. Also has phospholipase activity, and can therefore either reduce the oxidized sn-2 fatty acyl group of phospholipids (peroxidase activity) or hydrolyze the sn-2 ester bond of phospholipids (phospholipase activity). These activities are dependent on binding to phospholipids at acidic pH and to oxidized phospholipds at cytosolic pH. Plays a role in cell protection against oxidative stress by detoxifying peroxides and in phospholipid homeostasis. Exhibits acyl-CoA-dependent lysophospholipid acyltransferase which mediates the conversion of lysophosphatidylcholine (1-acyl-sn-glycero-3-phosphocholine or LPC) into phosphatidylcholine (1,2-diacyl-sn-glycero-3-phosphocholine or PC). Shows a clear preference for LPC as the lysophospholipid and for palmitoyl CoA as the fatty acyl substrate. The chain is Peroxiredoxin-6 (PRDX6) from Sus scrofa (Pig).